Reading from the N-terminus, the 428-residue chain is Putative zinc finger protein 355P (428 aa).

The 64-residue stretch at 1-64 (MRDEVAEKEK…KHPGLTQHNI (64 aa)) folds into the KRAB domain. 3 consecutive C2H2-type zinc fingers follow at residues 72–94 (YKCK…QRIH), 100–122 (YKCE…MRAH), and 128–150 (YKCE…KRIH). The C2H2-type 4; degenerate zinc finger occupies 156-178 (YKFEECDKAFYWVLSFTKHMIIH). The C2H2-type 5; degenerate zinc-finger motif lies at 184–206 (YKYQECGKAFKWSSNLTIHKRIH). The C2H2-type 6; degenerate zinc finger occupies 212–234 (CKCEECGKACKQSLGLTIQKRIH). The segment at 263-285 (YNCEKCGKAFYCSSNLIQNNIVH) adopts a C2H2-type 7; degenerate zinc-finger fold. C2H2-type zinc fingers lie at residues 291-313 (YKCQ…KIIH) and 335-357 (YKCE…MIVH). A C2H2-type 10; degenerate zinc finger spans residues 363-385 (YKCEECGKAFKWSSELTIHQRIR). The C2H2-type 11 zinc-finger motif lies at 391-413 (YKCEECVRVFKHSSKLNEHKRNH).

It belongs to the krueppel C2H2-type zinc-finger protein family.

The protein localises to the nucleus. In terms of biological role, may be involved in transcriptional regulation. This Homo sapiens (Human) protein is Putative zinc finger protein 355P (ZNF355P).